Reading from the N-terminus, the 411-residue chain is Exodeoxyribonuclease 7 large subunit (411 aa).

This sequence belongs to the XseA family. In terms of assembly, heterooligomer composed of large and small subunits.

It localises to the cytoplasm. It carries out the reaction Exonucleolytic cleavage in either 5'- to 3'- or 3'- to 5'-direction to yield nucleoside 5'-phosphates.. Its function is as follows. Bidirectionally degrades single-stranded DNA into large acid-insoluble oligonucleotides, which are then degraded further into small acid-soluble oligonucleotides. The sequence is that of Exodeoxyribonuclease 7 large subunit from Mycobacterium sp. (strain KMS).